A 388-amino-acid chain; its full sequence is Large ribosomal subunit protein uL3A (388 aa).

Residues 1-10 are compositionally biased toward basic and acidic residues; that stretch reads MSHCKFEQPR. The segment at 1–34 is disordered; sequence MSHCKFEQPRHGSLGFLPRKRASRQRGKVKAFPK. A Phosphoserine modification is found at Ser13. Basic residues predominate over residues 18-31; sequence PRKRASRQRGKVKA. Ser65, Ser140, Ser143, Ser207, Ser295, and Ser355 each carry phosphoserine. Thr372 is subject to Phosphothreonine.

It belongs to the universal ribosomal protein uL3 family. Component of the large ribosomal subunit (LSU). Mature yeast ribosomes consist of a small (40S) and a large (60S) subunit. The 40S small subunit contains 1 molecule of ribosomal RNA (18S rRNA) and at least 33 different proteins. The large 60S subunit contains 3 rRNA molecules (25S, 5.8S and 5S rRNA) and at least 46 different proteins. uL3 forms together with ES39L one of the contact sites for the signal recognition particle that targets ribosomes to the endoplasmic reticulum membrane.

It is found in the cytoplasm. Component of the ribosome, a large ribonucleoprotein complex responsible for the synthesis of proteins in the cell. The small ribosomal subunit (SSU) binds messenger RNAs (mRNAs) and translates the encoded message by selecting cognate aminoacyl-transfer RNA (tRNA) molecules. The large subunit (LSU) contains the ribosomal catalytic site termed the peptidyl transferase center (PTC), which catalyzes the formation of peptide bonds, thereby polymerizing the amino acids delivered by tRNAs into a polypeptide chain. The nascent polypeptides leave the ribosome through a tunnel in the LSU and interact with protein factors that function in enzymatic processing, targeting, and the membrane insertion of nascent chains at the exit of the ribosomal tunnel. uL3 plays a role in coordinating processes of accommodating the aminoacyl-tRNA in the PTC. This Schizosaccharomyces pombe (strain 972 / ATCC 24843) (Fission yeast) protein is Large ribosomal subunit protein uL3A (rpl301).